Reading from the N-terminus, the 70-residue chain is Putative membrane protein insertion efficiency factor (70 aa).

The protein belongs to the UPF0161 family.

It localises to the cell membrane. Its function is as follows. Could be involved in insertion of integral membrane proteins into the membrane. The chain is Putative membrane protein insertion efficiency factor from Rubrobacter xylanophilus (strain DSM 9941 / JCM 11954 / NBRC 16129 / PRD-1).